Here is a 67-residue protein sequence, read N- to C-terminus: MNDVTVVNCPTCNKQVIWDELSTWRPFCSKRCQLIDLGEWAAEEKRIPSSGDLNDSDDWSEQPLDRQ.

Residues Cys-9, Cys-12, Cys-28, and Cys-32 each coordinate Zn(2+). A disordered region spans residues Arg-46 to Gln-67.

Belongs to the DNA gyrase inhibitor YacG family. As to quaternary structure, interacts with GyrB. Zn(2+) serves as cofactor.

Functionally, inhibits all the catalytic activities of DNA gyrase by preventing its interaction with DNA. Acts by binding directly to the C-terminal domain of GyrB, which probably disrupts DNA binding by the gyrase. The polypeptide is DNA gyrase inhibitor YacG (Erwinia tasmaniensis (strain DSM 17950 / CFBP 7177 / CIP 109463 / NCPPB 4357 / Et1/99)).